We begin with the raw amino-acid sequence, 155 residues long: D-aminoacyl-tRNA deacylase (155 aa).

Positions 147 to 148 match the Gly-cisPro motif, important for rejection of L-amino acids motif; sequence GP.

This sequence belongs to the DTD family. Homodimer.

It localises to the cytoplasm. It carries out the reaction glycyl-tRNA(Ala) + H2O = tRNA(Ala) + glycine + H(+). It catalyses the reaction a D-aminoacyl-tRNA + H2O = a tRNA + a D-alpha-amino acid + H(+). Functionally, an aminoacyl-tRNA editing enzyme that deacylates mischarged D-aminoacyl-tRNAs. Also deacylates mischarged glycyl-tRNA(Ala), protecting cells against glycine mischarging by AlaRS. Acts via tRNA-based rather than protein-based catalysis; rejects L-amino acids rather than detecting D-amino acids in the active site. By recycling D-aminoacyl-tRNA to D-amino acids and free tRNA molecules, this enzyme counteracts the toxicity associated with the formation of D-aminoacyl-tRNA entities in vivo and helps enforce protein L-homochirality. The chain is D-aminoacyl-tRNA deacylase from Corynebacterium urealyticum (strain ATCC 43042 / DSM 7109).